Reading from the N-terminus, the 335-residue chain is 4-hydroxythreonine-4-phosphate dehydrogenase (335 aa).

Substrate is bound by residues histidine 135 and threonine 136. The a divalent metal cation site is built by histidine 165, histidine 210, and histidine 265. Substrate is bound by residues lysine 273, asparagine 282, and arginine 291.

Belongs to the PdxA family. In terms of assembly, homodimer. Zn(2+) serves as cofactor. Requires Mg(2+) as cofactor. The cofactor is Co(2+).

The protein resides in the cytoplasm. The enzyme catalyses 4-(phosphooxy)-L-threonine + NAD(+) = 3-amino-2-oxopropyl phosphate + CO2 + NADH. Its pathway is cofactor biosynthesis; pyridoxine 5'-phosphate biosynthesis; pyridoxine 5'-phosphate from D-erythrose 4-phosphate: step 4/5. In terms of biological role, catalyzes the NAD(P)-dependent oxidation of 4-(phosphooxy)-L-threonine (HTP) into 2-amino-3-oxo-4-(phosphooxy)butyric acid which spontaneously decarboxylates to form 3-amino-2-oxopropyl phosphate (AHAP). The protein is 4-hydroxythreonine-4-phosphate dehydrogenase of Saccharophagus degradans (strain 2-40 / ATCC 43961 / DSM 17024).